Here is a 144-residue protein sequence, read N- to C-terminus: MKALQASIAYSFPISSPAASPRRFSRVIRAQADPSDKSMEVMRKFSEQFCRKSDTYFCVDKSVTAVVIKGLADHRDTLGAPLCPCRHYDDKEAEAKQGFWNCPCVPMRERKECHCMLFLTPDNDFAGKEQTITLDEIREVTSNM.

The N-terminal 31 residues, Met-1–Gln-31, are a transit peptide targeting the chloroplast. Cys-83 serves as a coordination point for [4Fe-4S] cluster. Cys-85 functions as the Nucleophile in the catalytic mechanism. Residues Cys-85 and Cys-115 are joined by a disulfide bond. Residues Cys-102, Cys-104, and Cys-113 each contribute to the [4Fe-4S] cluster site.

Belongs to the ferredoxin thioredoxin reductase beta subunit family. Heterodimer of subunit A (variable subunit) and subunit B (catalytic subunit). Heterodimeric FTR forms a complex with ferredoxin and thioredoxin. [4Fe-4S] cluster serves as cofactor.

It localises to the plastid. Its subcellular location is the chloroplast. It catalyses the reaction [thioredoxin]-disulfide + 2 reduced [2Fe-2S]-[ferredoxin] + 2 H(+) = [thioredoxin]-dithiol + 2 oxidized [2Fe-2S]-[ferredoxin]. Functionally, catalytic subunit of the ferredoxin-thioredoxin reductase (FTR), which catalyzes the two-electron reduction of thioredoxins by the electrons provided by reduced ferredoxin. In Spinacia oleracea (Spinach), this protein is Ferredoxin-thioredoxin reductase catalytic chain, chloroplastic (FTRC).